The sequence spans 132 residues: Replication enhancer protein (132 aa).

The protein belongs to the geminiviridae replication enhancer protein family. In terms of assembly, homooligomer. Interacts with the replication-associated protein (REP). Interacts with host proliferating cell nuclear antigen (PCNA). Interacts with host retinoblastoma-related protein 1 (RBR1), and may thereby deregulate the host cell cycle. Oligomerization and interaction with PCNA are necessary for optimal replication enhancement.

Functionally, increases viral DNA accumulation. Enhances infectivity and symptom expression. The sequence is that of Replication enhancer protein from Macroptilium lathyroides (Lima bean).